The sequence spans 269 residues: Cytochrome c oxidase subunit 3 (269 aa).

7 helical membrane passes run 21–41 (PWPM…GLTA), 49–69 (MFML…FKDI), 90–110 (GFLM…WAFL), 132–152 (ISAA…GVTM), 167–187 (TLYG…FQGL), 205–225 (FFAL…MLAM), and 247–267 (ILYL…VYWW).

It belongs to the cytochrome c oxidase subunit 3 family. Component of the cytochrome c oxidase (complex IV, CIV), a multisubunit enzyme composed of a catalytic core of 3 subunits and several supernumerary subunits. The complex exists as a monomer or a dimer and forms supercomplexes (SCs) in the inner mitochondrial membrane with ubiquinol-cytochrome c oxidoreductase (cytochrome b-c1 complex, complex III, CIII).

It is found in the mitochondrion inner membrane. It carries out the reaction 4 Fe(II)-[cytochrome c] + O2 + 8 H(+)(in) = 4 Fe(III)-[cytochrome c] + 2 H2O + 4 H(+)(out). Its function is as follows. Component of the cytochrome c oxidase, the last enzyme in the mitochondrial electron transport chain which drives oxidative phosphorylation. The respiratory chain contains 3 multisubunit complexes succinate dehydrogenase (complex II, CII), ubiquinol-cytochrome c oxidoreductase (cytochrome b-c1 complex, complex III, CIII) and cytochrome c oxidase (complex IV, CIV), that cooperate to transfer electrons derived from NADH and succinate to molecular oxygen, creating an electrochemical gradient over the inner membrane that drives transmembrane transport and the ATP synthase. Cytochrome c oxidase is the component of the respiratory chain that catalyzes the reduction of oxygen to water. Electrons originating from reduced cytochrome c in the intermembrane space (IMS) are transferred via the dinuclear copper A center (CU(A)) of subunit 2 and heme A of subunit 1 to the active site in subunit 1, a binuclear center (BNC) formed by heme A3 and copper B (CU(B)). The BNC reduces molecular oxygen to 2 water molecules using 4 electrons from cytochrome c in the IMS and 4 protons from the mitochondrial matrix. This chain is Cytochrome c oxidase subunit 3 (COX3), found in Debaryomyces hansenii (strain ATCC 36239 / CBS 767 / BCRC 21394 / JCM 1990 / NBRC 0083 / IGC 2968) (Yeast).